Reading from the N-terminus, the 619-residue chain is Chaperone protein HscA homolog (619 aa).

The protein belongs to the heat shock protein 70 family.

Its function is as follows. Chaperone involved in the maturation of iron-sulfur cluster-containing proteins. Has a low intrinsic ATPase activity which is markedly stimulated by HscB. The chain is Chaperone protein HscA homolog from Acinetobacter baumannii (strain AB0057).